Here is a 345-residue protein sequence, read N- to C-terminus: MEEQLKQLEQEALAKIEAAASLKELNEVRVAYLGKKGPITDLLKGMGKLSAEERPKMGALVNNVRENVTAVLESKAAVLEEAAIAEKLASESIDVTLPGRAIKVGNRHPLTRVIEEIEDLFIGMGYEIAEGPEVEKDYYNFEALNLPKGHPARDMQDSFYISEEILLRTHTSPVQARTMEAKKGESIRIICPGKVFRRDNDDATHSHQFMQIEGLVIGENIRMSDLKGTLDTLAKKMFGAEREIRLRPSFFPFTEPSVEMDISCFKCGGAGCNVCKSTGWIEILGAGMVHPNVLEMAGYDPKKVSGFAFGIGAERIAMLKYGVDDIRHFYTSDTRFLSQFERTEA.

Glutamate 255 contributes to the Mg(2+) binding site.

It belongs to the class-II aminoacyl-tRNA synthetase family. Phe-tRNA synthetase alpha subunit type 1 subfamily. As to quaternary structure, tetramer of two alpha and two beta subunits. Requires Mg(2+) as cofactor.

It is found in the cytoplasm. The enzyme catalyses tRNA(Phe) + L-phenylalanine + ATP = L-phenylalanyl-tRNA(Phe) + AMP + diphosphate + H(+). In Lysinibacillus sphaericus (strain C3-41), this protein is Phenylalanine--tRNA ligase alpha subunit.